Reading from the N-terminus, the 485-residue chain is Shutoff alkaline exonuclease (485 aa).

Belongs to the herpesviridae alkaline nuclease family. Forms a complex with the DNA polymerase, the DNA polymerase processivity factor, and the major DNA binding protein.

It is found in the host nucleus. The protein resides in the host cytoplasm. Its function is as follows. Plays a role in processing non linear or branched viral DNA intermediates in order to promote the production of mature packaged unit-length linear progeny viral DNA molecules. Exhibits endonuclease and exonuclease activities and accepts both double-stranded and single-stranded DNA as substrate. Exonuclease digestion of DNA is in the 5'-&gt; 3' direction and the products are 5'-monophosphate nucleosides. Additionally, forms a recombinase with the major DNA-binding protein, which displays strand exchange activity. Also acts as a cytoplasmic RNA endonuclease that induces degradation of the majority of the cellular messenger RNAs during early lytic infection. The resulting inhibition of cellular protein synthesis serves to ensure maximal viral gene expression and evasion from host immune response. Internally cleaves host mRNAs which are then degraded by the cellular exonuclease XRN1. Bypasses therefore the regulatory steps of deadenylation and decapping normally required for XRN1 activation. In Alcelaphine herpesvirus 1 (strain C500) (AlHV-1), this protein is Shutoff alkaline exonuclease (37).